The chain runs to 829 residues: Translation initiation factor IF-2 (829 aa).

Residues 128 to 137 (QNAEEEKVEA) are compositionally biased toward basic and acidic residues. The segment at 128–157 (QNAEEEKVEASAKTVQNNEDIQPQTSKKKE) is disordered. Residues 140–152 (KTVQNNEDIQPQT) show a composition bias toward polar residues. One can recognise a tr-type G domain in the interval 327–497 (TRAPVVTVMG…LLIAEMQDLK (171 aa)). The interval 336–343 (GHVDHGKT) is G1. GTP is bound at residue 336 to 343 (GHVDHGKT). Residues 361 to 365 (GITQH) are G2. Residues 383 to 386 (DTPG) form a G3 region. Residues 383–387 (DTPGH) and 437–440 (NKID) contribute to the GTP site. The segment at 437–440 (NKID) is G4. Residues 473–475 (SAL) form a G5 region.

Belongs to the TRAFAC class translation factor GTPase superfamily. Classic translation factor GTPase family. IF-2 subfamily.

Its subcellular location is the cytoplasm. Its function is as follows. One of the essential components for the initiation of protein synthesis. Protects formylmethionyl-tRNA from spontaneous hydrolysis and promotes its binding to the 30S ribosomal subunits. Also involved in the hydrolysis of GTP during the formation of the 70S ribosomal complex. This chain is Translation initiation factor IF-2, found in Rickettsia felis (strain ATCC VR-1525 / URRWXCal2) (Rickettsia azadi).